Consider the following 477-residue polypeptide: Ankyrin repeat, SAM and basic leucine zipper domain-containing protein 1 (477 aa).

Phosphoserine is present on residues Ser-17, Ser-18, and Ser-20. ANK repeat units lie at residues 46–76 (EKKE…SVDA), 80–109 (YGWT…NASF), 112–146 (DKQT…DPNV), 150–179 (RLMT…EVNT), 183–212 (NGYT…NKML), and 216–245 (DGKL…PLEG). In terms of domain architecture, SAM spans 274–336 (SYAAFGDLEV…KILAALKELE (63 aa)).

In terms of assembly, interacts with DDX4, PIWIL1, RANBP9 and TDRD1.

It is found in the cytoplasm. Functionally, plays a central role during spermatogenesis by repressing transposable elements and preventing their mobilization, which is essential for the germline integrity. Acts via the piRNA metabolic process, which mediates the repression of transposable elements during meiosis by forming complexes composed of piRNAs and Piwi proteins and governs the methylation and subsequent repression of transposons. Its association with pi-bodies suggests a participation in the primary piRNAs metabolic process. Required prior to the pachytene stage to facilitate the production of multiple types of piRNAs, including those associated with repeats involved in the regulation of retrotransposons. May act by mediating protein-protein interactions during germ cell maturation. This Callithrix jacchus (White-tufted-ear marmoset) protein is Ankyrin repeat, SAM and basic leucine zipper domain-containing protein 1 (ASZ1).